A 1062-amino-acid polypeptide reads, in one-letter code: Carbamoyl phosphate synthase large chain (1062 aa).

The tract at residues 1–401 (MPKRTDIHKI…AMQKAVQSLE (401 aa)) is carboxyphosphate synthetic domain. Positions 129, 169, 175, 176, 208, 210, 215, 241, 242, 243, 284, and 298 each coordinate ATP. The 195-residue stretch at 133 to 327 (KELCQKLGEP…IAKMAAKIAI (195 aa)) folds into the ATP-grasp 1 domain. Mg(2+)-binding residues include Gln284, Glu298, and Asn300. Gln284, Glu298, and Asn300 together coordinate Mn(2+). An oligomerization domain region spans residues 402 to 546 (IDEKDLYSAK…YSTYDGENES (145 aa)). Residues 547-929 (RKSGKKSVIV…ALYKAFAGAK (383 aa)) form a carbamoyl phosphate synthetic domain region. An ATP-grasp 2 domain is found at 671–861 (DQIIKSLHLH…MAQVATRVIM (191 aa)). Positions 707, 746, 748, 752, 777, 778, 779, 780, 820, and 832 each coordinate ATP. Residues Gln820, Glu832, and Asn834 each contribute to the Mg(2+) site. Positions 820, 832, and 834 each coordinate Mn(2+). The MGS-like domain occupies 930-1062 (MQLPENGNVL…NRSFATDALK (133 aa)). Residues 930–1062 (MQLPENGNVL…NRSFATDALK (133 aa)) are allosteric domain.

Belongs to the CarB family. In terms of assembly, composed of two chains; the small (or glutamine) chain promotes the hydrolysis of glutamine to ammonia, which is used by the large (or ammonia) chain to synthesize carbamoyl phosphate. Tetramer of heterodimers (alpha,beta)4. Requires Mg(2+) as cofactor. The cofactor is Mn(2+).

The enzyme catalyses hydrogencarbonate + L-glutamine + 2 ATP + H2O = carbamoyl phosphate + L-glutamate + 2 ADP + phosphate + 2 H(+). It catalyses the reaction hydrogencarbonate + NH4(+) + 2 ATP = carbamoyl phosphate + 2 ADP + phosphate + 2 H(+). The protein operates within amino-acid biosynthesis; L-arginine biosynthesis; carbamoyl phosphate from bicarbonate: step 1/1. It functions in the pathway pyrimidine metabolism; UMP biosynthesis via de novo pathway; (S)-dihydroorotate from bicarbonate: step 1/3. Large subunit of the glutamine-dependent carbamoyl phosphate synthetase (CPSase). CPSase catalyzes the formation of carbamoyl phosphate from the ammonia moiety of glutamine, carbonate, and phosphate donated by ATP, constituting the first step of 2 biosynthetic pathways, one leading to arginine and/or urea and the other to pyrimidine nucleotides. The large subunit (synthetase) binds the substrates ammonia (free or transferred from glutamine from the small subunit), hydrogencarbonate and ATP and carries out an ATP-coupled ligase reaction, activating hydrogencarbonate by forming carboxy phosphate which reacts with ammonia to form carbamoyl phosphate. This Lactobacillus delbrueckii subsp. bulgaricus (strain ATCC BAA-365 / Lb-18) protein is Carbamoyl phosphate synthase large chain.